A 386-amino-acid polypeptide reads, in one-letter code: Patatin-2-Kuras 3 (386 aa).

A signal peptide spans 1-23 (MATTKSVLVLFFMILATTSSTCA). A PNPLA domain is found at 32–229 (LSIDGGGIKG…TVGDPALLSL (198 aa)). A GXGXXG motif is present at residues 36 to 41 (GGGIKG). The GXSXG motif lies at 75 to 79 (GTSTG). S77 serves as the catalytic Nucleophile. Residue N115 is glycosylated (N-linked (GlcNAc...) asparagine). D215 serves as the catalytic Proton acceptor. The DGA/G motif lies at 215 to 217 (DGA). Residues 321–384 (ENALTGTTTE…DRKKLRANKA (64 aa)) adopt a coiled-coil conformation.

This sequence belongs to the patatin family. Tuber.

The protein resides in the vacuole. In terms of biological role, probable lipolytic acyl hydrolase (LAH), an activity which is thought to be involved in the response of tubers to pathogens. The sequence is that of Patatin-2-Kuras 3 (pat2-k3) from Solanum tuberosum (Potato).